Consider the following 88-residue polypeptide: Molybdopterin synthase sulfur carrier subunit (88 aa).

G88 is modified (1-thioglycine; alternate). G88 carries the post-translational modification Glycyl adenylate; alternate.

The protein belongs to the MoaD family. MOCS2A subfamily. Heterotetramer; composed of 2 small (MOCS2A) and 2 large (MOCS2B) subunits. In terms of processing, C-terminal thiocarboxylation occurs in 2 steps, it is first acyl-adenylated (-COAMP) via the hesA/moeB/thiF part of MOCS3, then thiocarboxylated (-COSH) via the rhodanese domain of MOCS3.

The protein localises to the cytoplasm. It localises to the cytosol. It participates in cofactor biosynthesis; molybdopterin biosynthesis. Its function is as follows. Acts as a sulfur carrier required for molybdopterin biosynthesis. Component of the molybdopterin synthase complex that catalyzes the conversion of precursor Z into molybdopterin by mediating the incorporation of 2 sulfur atoms into precursor Z to generate a dithiolene group. In the complex, serves as sulfur donor by being thiocarboxylated (-COSH) at its C-terminus by MOCS3. After interaction with MOCS2B, the sulfur is then transferred to precursor Z to form molybdopterin. The sequence is that of Molybdopterin synthase sulfur carrier subunit from Mus musculus (Mouse).